The following is a 582-amino-acid chain: SUMO-activating enzyme subunit uba-2 (582 aa).

Residues 20 to 25 (GAGGIG), Asp44, 52 to 55 (NLNR), Lys68, 91 to 92 (SI), and 113 to 118 (DNRAAR) contribute to the ATP site. Zn(2+) contacts are provided by Cys154 and Cys157. Residue Cys170 is the Glycyl thioester intermediate of the active site. The segment covering 204-214 (SPDMDAVDPDN) has biased composition (acidic residues). Residues 204 to 235 (SPDMDAVDPDNTEAVTTEKEKEAMKEEPAPVG) are disordered. A compositionally biased stretch (basic and acidic residues) spans 219–231 (TTEKEKEAMKEEP). Zn(2+) is bound by residues Cys431 and Cys434. Basic and acidic residues predominate over residues 531 to 570 (FEVARSEKEPEPDDRKRKADGSEEPEAKRQKVEEKDDKNG). The interval 531 to 582 (FEVARSEKEPEPDDRKRKADGSEEPEAKRQKVEEKDDKNGNEAVAEITETMA) is disordered.

This sequence belongs to the ubiquitin-activating E1 family. As to quaternary structure, heterodimer with aos-1.

It participates in protein modification; protein sumoylation. The dimeric enzyme acts as an E1 ligase for smo-1. It mediates ATP-dependent activation of smo-1 and formation of a thioester with a conserved cysteine residue on uba-2. The protein is SUMO-activating enzyme subunit uba-2 (uba-2) of Caenorhabditis elegans.